A 246-amino-acid polypeptide reads, in one-letter code: Tyrosine recombinase XerD-like (246 aa).

Residues 1 to 72 enclose the Core-binding (CB) domain; the sequence is MINDINNFIE…AVNQFLFFLY (72 aa). Positions 84–246 constitute a Tyr recombinase domain; that stretch reads QETEKITLAQ…TPITLERYYR (163 aa). Catalysis depends on residues lysine 149 and arginine 212. The active-site O-(3'-phospho-DNA)-tyrosine intermediate is tyrosine 244.

The protein belongs to the 'phage' integrase family. XerD-like subfamily.

It localises to the cytoplasm. Its function is as follows. Putative tyrosine recombinase. Not involved in the cutting and rejoining of the recombining DNA molecules on dif(SL) site. In Streptococcus agalactiae serotype V (strain ATCC BAA-611 / 2603 V/R), this protein is Tyrosine recombinase XerD-like.